We begin with the raw amino-acid sequence, 45 residues long: Large ribosomal subunit protein bL36 (45 aa).

It belongs to the bacterial ribosomal protein bL36 family.

The polypeptide is Large ribosomal subunit protein bL36 (Aliivibrio salmonicida (strain LFI1238) (Vibrio salmonicida (strain LFI1238))).